The sequence spans 141 residues: ATP synthase epsilon chain (141 aa).

It belongs to the ATPase epsilon chain family. F-type ATPases have 2 components, CF(1) - the catalytic core - and CF(0) - the membrane proton channel. CF(1) has five subunits: alpha(3), beta(3), gamma(1), delta(1), epsilon(1). CF(0) has three main subunits: a, b and c.

It is found in the cell membrane. Functionally, produces ATP from ADP in the presence of a proton gradient across the membrane. This Lactococcus lactis subsp. cremoris (strain MG1363) protein is ATP synthase epsilon chain.